A 289-amino-acid chain; its full sequence is Aquaporin PIP1-1 (289 aa).

Residues 1–36 (MEGKEEDVRLGANRYSERQPIGTAAQGAGDDKDYKE) form a disordered region. 2 helical membrane-spanning segments follow: residues 58-78 (IAEF…VMGV) and 93-115 (IAWS…SGGH). Positions 117 to 119 (NPA) match the NPA 1 motif. 3 helical membrane passes run 136–156 (IFYI…VKGF), 178–198 (GDGL…VFSA), and 212–232 (ILAP…TIPI). Positions 238 to 240 (NPA) match the NPA 2 motif. The chain crosses the membrane as a helical span at residues 260–280 (IFWVGPFVGAALAAIYHQVII).

This sequence belongs to the MIP/aquaporin (TC 1.A.8) family. PIP (TC 1.A.8.11) subfamily. In terms of tissue distribution, expressed in roots, leaves and anthers.

Its subcellular location is the cell membrane. Its function is as follows. May function as water channel to facilitate the transport of water across cell membrane. This chain is Aquaporin PIP1-1 (PIP1-1), found in Oryza sativa subsp. japonica (Rice).